Reading from the N-terminus, the 188-residue chain is MRCDVRALALAARGLIELMIVIPMVAGCSNAGSNKSVGTISSTPGNTEGHHGPMFPRCGGISDQTMSQLTKVTGLTNTARNSVGCQWLAGGGIVGPHFSFSWYRGSPIGRERKTEELSRASVDDININGHSGFIAVGNEPSLGDSLCEVGIQFQDDFIEWSVSFSQKPFPSPCGIAKELTRQSIANSK.

Positions 1 to 27 (MRCDVRALALAARGLIELMIVIPMVAG) are cleaved as a signal peptide. Cysteine 28 is lipidated: N-palmitoyl cysteine. Cysteine 28 carries the S-diacylglycerol cysteine lipid modification.

Its subcellular location is the cell membrane. The polypeptide is Putative lipoprotein LprB (lprB) (Mycobacterium leprae (strain TN)).